Reading from the N-terminus, the 157-residue chain is NADPH-dependent 7-cyano-7-deazaguanine reductase (157 aa).

Cys-56 serves as the catalytic Thioimide intermediate. Asp-63 serves as the catalytic Proton donor. Substrate is bound by residues 78-80 (VES) and 97-98 (HE).

It belongs to the GTP cyclohydrolase I family. QueF type 1 subfamily.

The protein resides in the cytoplasm. The enzyme catalyses 7-aminomethyl-7-carbaguanine + 2 NADP(+) = 7-cyano-7-deazaguanine + 2 NADPH + 3 H(+). The protein operates within tRNA modification; tRNA-queuosine biosynthesis. In terms of biological role, catalyzes the NADPH-dependent reduction of 7-cyano-7-deazaguanine (preQ0) to 7-aminomethyl-7-deazaguanine (preQ1). The protein is NADPH-dependent 7-cyano-7-deazaguanine reductase of Parabacteroides distasonis (strain ATCC 8503 / DSM 20701 / CIP 104284 / JCM 5825 / NCTC 11152).